Consider the following 729-residue polypeptide: Disintegrin and metalloproteinase domain-containing protein 21 (729 aa).

The first 39 residues, 1-39, serve as a signal peptide directing secretion; it reads MECFIMLGADARTLMRVTLLLLWLKALPSLIDLSQTGST. A propeptide spanning residues 40–209 is cleaved from the precursor; sequence QYLSSPEVVI…MKQNYGKLWP (170 aa). An N-linked (GlcNAc...) asparagine glycan is attached at asparagine 169. The Cysteine switch motif lies at 176-183; that stretch reads MLCSLTEK. Cysteine 178 serves as a coordination point for Zn(2+). The Extracellular portion of the chain corresponds to 210–685; the sequence is HMWFLELAVV…DSGPTSQKRR (476 aa). The region spanning 212 to 402 is the Peptidase M12B domain; the sequence is WFLELAVVVD…NQGTCLYNHP (191 aa). Asparagine 231 carries N-linked (GlcNAc...) asparagine glycosylation. Intrachain disulfides connect cysteine 320–cysteine 397, cysteine 360–cysteine 382, and cysteine 362–cysteine 367. Zn(2+) is bound at residue histidine 345. Glutamate 346 is an active-site residue. Residues histidine 349 and histidine 355 each coordinate Zn(2+). Asparagine 381, asparagine 441, and asparagine 482 each carry an N-linked (GlcNAc...) asparagine glycan. Residues 410–496 form the Disintegrin domain; the sequence is VKRCGNGMVE…QCPEDGYVQD (87 aa). 4 disulfides stabilise this stretch: cysteine 468-cysteine 488, cysteine 638-cysteine 649, cysteine 643-cysteine 655, and cysteine 657-cysteine 666. The 30-residue stretch at 638 to 667 folds into the EGF-like domain; that stretch reads CLPETCNRKGVCNNKHHCHCDYGWSPPFCL. A helical transmembrane segment spans residues 686 to 706; that stretch reads VIITVLSITVPVLSILICLLI. The Cytoplasmic segment spans residues 707–729; that stretch reads AGLYRIYCKIPSGPKETKASSPG.

Zn(2+) serves as cofactor. In terms of processing, has no obvious cleavage site for furin endopeptidase, suggesting that the proteolytic processing is regulated. As to expression, highly expressed in Leydig cells. Expressed also in cauda epididymidis, vas deferens, convoluted tubules, kidney and the parietal cells of stomach. Not detected on developing spermatocytes or mature sperm.

The protein localises to the membrane. Its function is as follows. May be involved in sperm maturation and/or fertilization. May also be involved in epithelia functions associated with establishing and maintaining gradients of ions or nutrients. In Mus musculus (Mouse), this protein is Disintegrin and metalloproteinase domain-containing protein 21 (Adam21).